Reading from the N-terminus, the 169-residue chain is Crossover junction endodeoxyribonuclease RuvC (169 aa).

Active-site residues include Asp13, Glu73, and Asp145. The Mg(2+) site is built by Asp13, Glu73, and Asp145.

This sequence belongs to the RuvC family. Homodimer which binds Holliday junction (HJ) DNA. The HJ becomes 2-fold symmetrical on binding to RuvC with unstacked arms; it has a different conformation from HJ DNA in complex with RuvA. In the full resolvosome a probable DNA-RuvA(4)-RuvB(12)-RuvC(2) complex forms which resolves the HJ. Mg(2+) serves as cofactor.

The protein localises to the cytoplasm. The catalysed reaction is Endonucleolytic cleavage at a junction such as a reciprocal single-stranded crossover between two homologous DNA duplexes (Holliday junction).. Functionally, the RuvA-RuvB-RuvC complex processes Holliday junction (HJ) DNA during genetic recombination and DNA repair. Endonuclease that resolves HJ intermediates. Cleaves cruciform DNA by making single-stranded nicks across the HJ at symmetrical positions within the homologous arms, yielding a 5'-phosphate and a 3'-hydroxyl group; requires a central core of homology in the junction. The consensus cleavage sequence is 5'-(A/T)TT(C/G)-3'. Cleavage occurs on the 3'-side of the TT dinucleotide at the point of strand exchange. HJ branch migration catalyzed by RuvA-RuvB allows RuvC to scan DNA until it finds its consensus sequence, where it cleaves and resolves the cruciform DNA. This chain is Crossover junction endodeoxyribonuclease RuvC, found in Solidesulfovibrio magneticus (strain ATCC 700980 / DSM 13731 / RS-1) (Desulfovibrio magneticus).